Reading from the N-terminus, the 67-residue chain is Large ribosomal subunit protein bL32 (67 aa).

Basic residues predominate over residues 1–19; that stretch reads MAVPKRKMSRSNTRARRSQ. Positions 1–21 are disordered; that stretch reads MAVPKRKMSRSNTRARRSQWK.

It belongs to the bacterial ribosomal protein bL32 family.

The polypeptide is Large ribosomal subunit protein bL32 (Arthrobacter sp. (strain FB24)).